Here is a 138-residue protein sequence, read N- to C-terminus: Basic phospholipase A2 beta-bungarotoxin A-AL3 chain (138 aa).

An N-terminal signal peptide occupies residues 1–10; sequence LAVCVSLIGA. Residues 11–18 constitute a propeptide that is removed on maturation; sequence ANIPPQHL. Cystine bridges form between Cys45/Cys137, Cys47/Cys63, Cys62/Cys118, Cys69/Cys111, Cys79/Cys104, and Cys97/Cys109. Residues Tyr46, Gly48, and Gly50 each coordinate Ca(2+). His66 is a catalytic residue. Asp67 contacts Ca(2+). The active site involves Asp112.

It belongs to the phospholipase A2 family. Group I subfamily. D49 sub-subfamily. As to quaternary structure, heterodimer; disulfide-linked. The A chains have phospholipase A2 activity and the B chains show homology with the basic protease inhibitors. Requires Ca(2+) as cofactor. Expressed by the venom gland.

The protein resides in the secreted. The enzyme catalyses a 1,2-diacyl-sn-glycero-3-phosphocholine + H2O = a 1-acyl-sn-glycero-3-phosphocholine + a fatty acid + H(+). Functionally, snake venom phospholipase A2 (PLA2) that inhibits neuromuscular transmission by blocking acetylcholine release from the nerve termini. PLA2 catalyzes the calcium-dependent hydrolysis of the 2-acyl groups in 3-sn-phosphoglycerides. The sequence is that of Basic phospholipase A2 beta-bungarotoxin A-AL3 chain from Bungarus multicinctus (Many-banded krait).